Reading from the N-terminus, the 77-residue chain is Secapin (77 aa).

The signal sequence occupies residues 1–32 (MKNYSKNATYLITVLLFSFVAMLLIIPSKCEA). Residues 33-52 (VSNDMQPLEARTADLVQQPR) constitute a propeptide that is removed on maturation. The cysteines at positions 61 and 72 are disulfide-linked.

The protein belongs to the secapin family. As to expression, expressed by the venom gland.

Its subcellular location is the secreted. Nontoxic peptide. The polypeptide is Secapin (Apis cerana cerana (Oriental honeybee)).